Here is a 302-residue protein sequence, read N- to C-terminus: Sulfate adenylyltransferase subunit 2 (302 aa).

The segment at 280–302 (RQGRVIDHDQAGSMEQKKREGYF) is disordered.

It belongs to the PAPS reductase family. CysD subfamily. In terms of assembly, heterodimer composed of CysD, the smaller subunit, and CysN.

The enzyme catalyses sulfate + ATP + H(+) = adenosine 5'-phosphosulfate + diphosphate. Its pathway is sulfur metabolism; hydrogen sulfide biosynthesis; sulfite from sulfate: step 1/3. In terms of biological role, with CysN forms the ATP sulfurylase (ATPS) that catalyzes the adenylation of sulfate producing adenosine 5'-phosphosulfate (APS) and diphosphate, the first enzymatic step in sulfur assimilation pathway. APS synthesis involves the formation of a high-energy phosphoric-sulfuric acid anhydride bond driven by GTP hydrolysis by CysN coupled to ATP hydrolysis by CysD. This chain is Sulfate adenylyltransferase subunit 2, found in Hahella chejuensis (strain KCTC 2396).